Here is an 885-residue protein sequence, read N- to C-terminus: Protein transport protein SEC24-1 (885 aa).

Positions 164, 167, 186, and 189 each coordinate Zn(2+). Positions 164–189 (CRRCRSYLNPFVAFIEQGRRWQCNIC) are zinc finger-like. Positions 296-332 (DDYEESDDDDDEDDDDEEEDNEEEEEEEEDEEDDDDS) are disordered.

It belongs to the SEC23/SEC24 family. SEC24 subfamily. In terms of assembly, the COPII coat is composed of at least 5 proteins: the SEC23/24 complex, the SEC13/31 complex, and the protein SAR1. Golgi apparatus membrane; Peripheral membrane protein; Cytoplasmic side.

The protein localises to the cytoplasm. The protein resides in the cytoplasmic vesicle. Its subcellular location is the COPII-coated vesicle membrane. It is found in the endoplasmic reticulum membrane. It localises to the golgi apparatus membrane. Its function is as follows. Component of the coat protein complex II (COPII) which promotes the formation of transport vesicles from the endoplasmic reticulum (ER). The coat has two main functions, the physical deformation of the endoplasmic reticulum membrane into vesicles and the selection of cargo molecules. This is Protein transport protein SEC24-1 (SEC241) from Saccharomyces uvarum (strain ATCC 76518 / CBS 7001 / CLIB 283 / NBRC 10550 / MCYC 623 / NCYC 2669 / NRRL Y-11845) (Yeast).